A 339-amino-acid chain; its full sequence is 3-isopropylmalate dehydrogenase (339 aa).

Residues Arg88, Arg98, Arg122, and Asp212 each coordinate substrate. Asp212, Asp236, and Asp240 together coordinate Mg(2+). NAD(+) is bound at residue 272–284 (GSAPDIAGQGIAD).

The protein belongs to the isocitrate and isopropylmalate dehydrogenases family. LeuB type 2 subfamily. Homodimer. The cofactor is Mg(2+). It depends on Mn(2+) as a cofactor.

The protein localises to the cytoplasm. The enzyme catalyses (2R,3S)-3-isopropylmalate + NAD(+) = 4-methyl-2-oxopentanoate + CO2 + NADH. Its pathway is amino-acid biosynthesis; L-leucine biosynthesis; L-leucine from 3-methyl-2-oxobutanoate: step 3/4. Functionally, catalyzes the oxidation of 3-carboxy-2-hydroxy-4-methylpentanoate (3-isopropylmalate) to 3-carboxy-4-methyl-2-oxopentanoate. The product decarboxylates to 4-methyl-2 oxopentanoate. This chain is 3-isopropylmalate dehydrogenase, found in Corynebacterium diphtheriae (strain ATCC 700971 / NCTC 13129 / Biotype gravis).